We begin with the raw amino-acid sequence, 218 residues long: Thiopurine S-methyltransferase (218 aa).

S-adenosyl-L-methionine contacts are provided by Trp10, Leu45, Glu66, and Arg123.

The protein belongs to the class I-like SAM-binding methyltransferase superfamily. TPMT family.

The protein localises to the cytoplasm. It carries out the reaction S-adenosyl-L-methionine + a thiopurine = S-adenosyl-L-homocysteine + a thiopurine S-methylether.. In Azotobacter vinelandii (strain DJ / ATCC BAA-1303), this protein is Thiopurine S-methyltransferase.